Reading from the N-terminus, the 230-residue chain is Ribonuclease 3 (230 aa).

The 124-residue stretch at 10–133 (DPRLLSRIGY…IIGAIYLDSG (124 aa)) folds into the RNase III domain. Glu46 is a binding site for Mg(2+). The active site involves Asp50. Mg(2+) is bound by residues Asp119 and Glu122. Glu122 is an active-site residue. Residues 161–230 (DPKSRLQEYL…AAEILKLLEQ (70 aa)) form the DRBM domain.

This sequence belongs to the ribonuclease III family. As to quaternary structure, homodimer. Requires Mg(2+) as cofactor.

The protein localises to the cytoplasm. It carries out the reaction Endonucleolytic cleavage to 5'-phosphomonoester.. Its function is as follows. Digests double-stranded RNA. Involved in the processing of primary rRNA transcript to yield the immediate precursors to the large and small rRNAs (23S and 16S). Processes some mRNAs, and tRNAs when they are encoded in the rRNA operon. Processes pre-crRNA and tracrRNA of type II CRISPR loci if present in the organism. The sequence is that of Ribonuclease 3 (rnc) from Acinetobacter pittii (strain PHEA-2).